The following is a 313-amino-acid chain: Adhesin MafA 1 (313 aa).

Positions 1–14 (MKILLLLIPLVLTA) are cleaved as a signal peptide. The N-palmitoyl cysteine moiety is linked to residue C15. C15 carries S-diacylglycerol cysteine lipidation. The segment covering 282-298 (GDTTAQNRPDFKQNNGK) has biased composition (polar residues). The tract at residues 282-313 (GDTTAQNRPDFKQNNGKNPDVGNEVIRRRKGG) is disordered.

Belongs to the MafA family.

It is found in the cell outer membrane. The chain is Adhesin MafA 1 (mafA1) from Neisseria meningitidis serogroup C / serotype 2a (strain ATCC 700532 / DSM 15464 / FAM18).